The following is a 457-amino-acid chain: Acetylcholine receptor subunit alpha-1-B (457 aa).

An N-terminal signal peptide occupies residues 1-20 (MDYTASCLIFLFIAAGTVFG). The Extracellular portion of the chain corresponds to 21–230 (TDHETRLIGD…ITYHFVLQRL (210 aa)). 2 disulfides stabilise this stretch: cysteine 148-cysteine 162 and cysteine 212-cysteine 213. Asparagine 161 is a glycosylation site (N-linked (GlcNAc...) asparagine). The next 3 helical transmembrane spans lie at 231-255 (PLYF…VFYL), 263-281 (MTLS…LVIV), and 297-316 (YMLF…VIVI). At 317 to 428 (NTHHRSPSTH…WKFVAMVLDH (112 aa)) the chain is on the cytoplasmic side. A helical membrane pass occupies residues 429–447 (ILLAVFMTVCVIGTLAVFA).

The protein belongs to the ligand-gated ion channel (TC 1.A.9) family. Acetylcholine receptor (TC 1.A.9.1) subfamily. Alpha-1/CHRNA1 sub-subfamily. As to quaternary structure, one of the alpha chains that assemble within the acetylcholine receptor, a pentamer of two alpha chains, a beta, a delta, and a gamma or epsilon chains.

It localises to the postsynaptic cell membrane. The protein localises to the cell membrane. The enzyme catalyses K(+)(in) = K(+)(out). It catalyses the reaction Na(+)(in) = Na(+)(out). Functionally, upon acetylcholine binding, the AChR responds by an extensive change in conformation that affects all subunits and leads to opening of an ion-conducting channel across the plasma membrane. The protein is Acetylcholine receptor subunit alpha-1-B (chrna1-b) of Xenopus laevis (African clawed frog).